A 239-amino-acid polypeptide reads, in one-letter code: Calcium-activated potassium channel subunit beta-3 (239 aa).

Topologically, residues 1 to 51 (MQPFSIPVQITLQGGRRRQGRTALPASGISNGDPLKVHPKLPSSAGEDRAT) are cytoplasmic. The interval 15-38 (GRRRQGRTALPASGISNGDPLKVH) is disordered. The helical transmembrane segment at 52 to 72 (LLGIAMMASSVLMFFLLGTTV) threads the bilayer. Residues 73–197 (LKPFMLSSPR…GVVLRKSGHK (125 aa)) lie on the Extracellular side of the membrane. N86, N123, and N174 each carry an N-linked (GlcNAc...) asparagine glycan. A helical transmembrane segment spans residues 198 to 218 (VVFHCLFWPLLTLLGGALIVG). Residues 219–239 (LVRLTQHLSFQCEKYRAVVRA) are Cytoplasmic-facing.

Belongs to the KCNMB (TC 8.A.14.1) family. KCNMB3 subfamily. Interacts with KCNMA1 tetramer. There are probably 4 molecules of KCMNB3 per KCNMA1 tetramer. In terms of processing, N-glycosylated. The extracellular domain contains disulfide bond essential for the gating mechanism.

The protein localises to the membrane. Regulatory subunit of the calcium activated potassium KCNMA1 (maxiK) channel. Modulates the calcium sensitivity and gating kinetics of KCNMA1, thereby contributing to KCNMA1 channel diversity. Alters the functional properties of the current expressed by the KCNMA1 channel. May partially inactivate the current of KCNBMA. Two or more subunits of KCNMB3 are required to block the KCNMA1 tetramer. This chain is Calcium-activated potassium channel subunit beta-3, found in Rattus norvegicus (Rat).